The chain runs to 710 residues: Interleukin-1 receptor-associated kinase 1 (710 aa).

The region spanning 27 to 106 is the Death domain; the sequence is MCRFYKVMDA…DIITAWHPPA (80 aa). Thr-66 carries the phosphothreonine; by PKC/PRKCI modification. The interval 107-133 is disordered; the sequence is PVVPPSTAAPRPSSISAGSEAGDWSPR. Positions 110–211 are proST region; that stretch reads PPSTAAPRPS…FCEISQGTCN (102 aa). Residues 111–123 show a composition bias toward low complexity; the sequence is PSTAAPRPSSISA. Ser-131 bears the Phosphoserine mark. Glycyl lysine isopeptide (Lys-Gly) (interchain with G-Cter in ubiquitin) cross-links involve residues Lys-134 and Lys-180. The segment at 169–190 is disordered; sequence PPLPSSAPSSTKSSPESPVSGL. The segment covering 174-188 has biased composition (low complexity); that stretch reads SAPSSTKSSPESPVS. Thr-209 carries the phosphothreonine; by IRAK4 modification. The region spanning 212–521 is the Protein kinase domain; the sequence is FSEELRIGEG…TQVYKRLEGL (310 aa). ATP-binding positions include 218-226 and Lys-239; that span reads IGEGGFGCV. The active-site Proton acceptor is the Asp-340. ATP contacts are provided by residues 342–345 and Asp-358; that span reads KSSN. A Phosphoserine modification is found at Ser-375. A Phosphothreonine modification is found at Thr-387. Disordered regions lie at residues 527 to 655 and 689 to 710; these read WELE…SEPP and FPGLDLEPEKSQGPEESDEFQS. The segment covering 537-553 has biased composition (polar residues); it reads PSPQENSYMSTTGSAQS. A Phosphoserine modification is found at Ser-553. The segment covering 567 to 576 has biased composition (low complexity); it reads APAQAAQQLQ. Residues 616 to 639 are compositionally biased toward polar residues; sequence SCTQGGTTRESSVRSSPGFQPTTM. Residues 640–654 show a composition bias toward low complexity; sequence EGSPTGSSSLLSSEP.

This sequence belongs to the protein kinase superfamily. TKL Ser/Thr protein kinase family. Pelle subfamily. As to quaternary structure, homodimer. Forms a complex with TRAF6, PELI1, IRAK4 and MYD88. Direct binding of SMAD6 to PELI1 prevents complex formation and hence negatively regulates IL1R-TLR signaling and eventually NF-kappa-B-mediated gene expression. The TRAF6-PELI1-IRAK4-MYD88 complex recruits MAP3K7/TAK1, TAB1 and TAB2 to mediate NF-kappa-B activation. Interaction with MYD88 recruits IRAK1 to the stimulated receptor complex. Interacts with TOLLIP; this interaction occurs in the cytosol prior to receptor activation. Interacts with IL1RL1. Interacts (when polyubiquitinated) with IKBKG/NEMO. Interacts with RSAD2/viperin. Interacts with IRAK1BP1. Interacts with PELI2. Interacts with ZC3H12A; this interaction increases the interaction between ZC3H12A and IKBKB/IKKB. Interacts with IRAK4. Interacts with PELI3. Interacts with PELI1 and TRAF6. Interacts with INAVA; the interaction takes place upon PRR stimulation. Interacts (via C-terminus) with NFATC4 (via N-terminus). Mg(2+) is required as a cofactor. Post-translationally, following recruitment on the activated receptor complex, phosphorylated on Thr-209, probably by IRAK4, resulting in a conformational change of the kinase domain, allowing further phosphorylations to take place. Thr-387 phosphorylation in the activation loop is required to achieve full enzymatic activity. Polyubiquitinated by TRAF6 after cell stimulation with IL-1-beta by PELI1, PELI2 and PELI3. Polyubiquitination occurs with polyubiquitin chains linked through 'Lys-63'. Ubiquitination promotes interaction with NEMO/IKBKG. Also sumoylated; leading to nuclear translocation. In terms of tissue distribution, highly expressed in liver, followed by kidney and skeletal muscle.

The protein localises to the cytoplasm. The protein resides in the nucleus. It localises to the lipid droplet. It catalyses the reaction L-seryl-[protein] + ATP = O-phospho-L-seryl-[protein] + ADP + H(+). It carries out the reaction L-threonyl-[protein] + ATP = O-phospho-L-threonyl-[protein] + ADP + H(+). Serine/threonine-protein kinase that plays a critical role in initiating innate immune response against foreign pathogens. Involved in Toll-like receptor (TLR) and IL-1R signaling pathways. Is rapidly recruited by MYD88 to the receptor-signaling complex upon TLR activation. Association with MYD88 leads to IRAK1 phosphorylation by IRAK4 and subsequent autophosphorylation and kinase activation. Phosphorylates E3 ubiquitin ligases Pellino proteins (PELI1, PELI2 and PELI3) to promote pellino-mediated polyubiquitination of IRAK1. Then, the ubiquitin-binding domain of IKBKG/NEMO binds to polyubiquitinated IRAK1 bringing together the IRAK1-MAP3K7/TAK1-TRAF6 complex and the NEMO-IKKA-IKKB complex. In turn, MAP3K7/TAK1 activates IKKs (CHUK/IKKA and IKBKB/IKKB) leading to NF-kappa-B nuclear translocation and activation. Alternatively, phosphorylates TIRAP to promote its ubiquitination and subsequent degradation. Phosphorylates the interferon regulatory factor 7 (IRF7) to induce its activation and translocation to the nucleus, resulting in transcriptional activation of type I IFN genes, which drive the cell in an antiviral state. When sumoylated, translocates to the nucleus and phosphorylates STAT3. This Mus musculus (Mouse) protein is Interleukin-1 receptor-associated kinase 1 (Irak1).